We begin with the raw amino-acid sequence, 333 residues long: Foldase protein PrsA (333 aa).

The first 22 residues, 1 to 22 (MKKSTKLLAGIVTLASAMTLAA), serve as a signal peptide directing secretion. A lipid anchor (N-palmitoyl cysteine) is attached at Cys-23. Cys-23 carries the S-diacylglycerol cysteine lipid modification. Residues 145 to 240 (TPEMTTQVTT…NKFYIVKVTK (96 aa)) form the PpiC domain. Positions 301–333 (DKKASKANTSKSDQKSSSDSSKDSQSSKSKSEK) are disordered. Over residues 312–322 (SDQKSSSDSSK) the composition is skewed to basic and acidic residues. Positions 323 to 333 (DSQSSKSKSEK) are enriched in low complexity.

It belongs to the PrsA family.

Its subcellular location is the cell membrane. The catalysed reaction is [protein]-peptidylproline (omega=180) = [protein]-peptidylproline (omega=0). Plays a major role in protein secretion by helping the post-translocational extracellular folding of several secreted proteins. This is Foldase protein PrsA from Streptococcus equi subsp. equi (strain 4047).